The following is a 188-amino-acid chain: UPF0301 protein Tcr_1827 (188 aa).

This sequence belongs to the UPF0301 (AlgH) family.

This chain is UPF0301 protein Tcr_1827, found in Hydrogenovibrio crunogenus (strain DSM 25203 / XCL-2) (Thiomicrospira crunogena).